Reading from the N-terminus, the 304-residue chain is Ribosomal RNA small subunit methyltransferase H (304 aa).

S-adenosyl-L-methionine is bound by residues 47–49 (GGH), Asp66, Phe93, Asp108, and Gln115.

It belongs to the methyltransferase superfamily. RsmH family.

The protein resides in the cytoplasm. It catalyses the reaction cytidine(1402) in 16S rRNA + S-adenosyl-L-methionine = N(4)-methylcytidine(1402) in 16S rRNA + S-adenosyl-L-homocysteine + H(+). Specifically methylates the N4 position of cytidine in position 1402 (C1402) of 16S rRNA. This chain is Ribosomal RNA small subunit methyltransferase H, found in Prochlorococcus marinus (strain NATL1A).